The following is a 142-amino-acid chain: Large ribosomal subunit protein uL11 (142 aa).

The protein belongs to the universal ribosomal protein uL11 family. In terms of assembly, part of the ribosomal stalk of the 50S ribosomal subunit. Interacts with L10 and the large rRNA to form the base of the stalk. L10 forms an elongated spine to which L12 dimers bind in a sequential fashion forming a multimeric L10(L12)X complex. Post-translationally, one or more lysine residues are methylated.

Its function is as follows. Forms part of the ribosomal stalk which helps the ribosome interact with GTP-bound translation factors. The chain is Large ribosomal subunit protein uL11 from Vesicomyosocius okutanii subsp. Calyptogena okutanii (strain HA).